We begin with the raw amino-acid sequence, 202 residues long: ATP-dependent Clp protease proteolytic subunit (202 aa).

S98 (nucleophile) is an active-site residue. H123 is an active-site residue.

This sequence belongs to the peptidase S14 family. Fourteen ClpP subunits assemble into 2 heptameric rings which stack back to back to give a disk-like structure with a central cavity, resembling the structure of eukaryotic proteasomes.

The protein resides in the cytoplasm. It catalyses the reaction Hydrolysis of proteins to small peptides in the presence of ATP and magnesium. alpha-casein is the usual test substrate. In the absence of ATP, only oligopeptides shorter than five residues are hydrolyzed (such as succinyl-Leu-Tyr-|-NHMec, and Leu-Tyr-Leu-|-Tyr-Trp, in which cleavage of the -Tyr-|-Leu- and -Tyr-|-Trp bonds also occurs).. Cleaves peptides in various proteins in a process that requires ATP hydrolysis. Has a chymotrypsin-like activity. Plays a major role in the degradation of misfolded proteins. The protein is ATP-dependent Clp protease proteolytic subunit of Magnetococcus marinus (strain ATCC BAA-1437 / JCM 17883 / MC-1).